The chain runs to 311 residues: ATP synthase subunit gamma, mitochondrial (311 aa).

The N-terminal 33 residues, 1-33, are a transit peptide targeting the mitochondrion; the sequence is MLSRIVSNNATRSVMCHQAQVGILYKTNPVRTY.

Belongs to the ATPase gamma chain family. F-type ATPases have 2 components, CF(1) - the catalytic core - and CF(0) - the membrane proton channel. CF(1) has five subunits: alpha(3), beta(3), gamma(1), delta(1), epsilon(1). CF(0) has three main subunits: a, b and c.

The protein resides in the mitochondrion. The protein localises to the mitochondrion inner membrane. Mitochondrial membrane ATP synthase (F(1)F(0) ATP synthase or Complex V) produces ATP from ADP in the presence of a proton gradient across the membrane which is generated by electron transport complexes of the respiratory chain. F-type ATPases consist of two structural domains, F(1) - containing the extramembraneous catalytic core, and F(0) - containing the membrane proton channel, linked together by a central stalk and a peripheral stalk. During catalysis, ATP synthesis in the catalytic domain of F(1) is coupled via a rotary mechanism of the central stalk subunits to proton translocation. Part of the complex F(1) domain and the central stalk which is part of the complex rotary element. The gamma subunit protrudes into the catalytic domain formed of alpha(3)beta(3). Rotation of the central stalk against the surrounding alpha(3)beta(3) subunits leads to hydrolysis of ATP in three separate catalytic sites on the beta subunits. The sequence is that of ATP synthase subunit gamma, mitochondrial (ATP3) from Saccharomyces cerevisiae (strain ATCC 204508 / S288c) (Baker's yeast).